Here is a 231-residue protein sequence, read N- to C-terminus: Orotidine 5'-phosphate decarboxylase (231 aa).

Substrate contacts are provided by residues D11, K33, 60 to 69 (DLKFHDIPNT), T117, R178, Q187, G207, and R208. The active-site Proton donor is the K62.

The protein belongs to the OMP decarboxylase family. Type 1 subfamily. In terms of assembly, homodimer.

The enzyme catalyses orotidine 5'-phosphate + H(+) = UMP + CO2. It functions in the pathway pyrimidine metabolism; UMP biosynthesis via de novo pathway; UMP from orotate: step 2/2. Functionally, catalyzes the decarboxylation of orotidine 5'-monophosphate (OMP) to uridine 5'-monophosphate (UMP). In Nitrosomonas europaea (strain ATCC 19718 / CIP 103999 / KCTC 2705 / NBRC 14298), this protein is Orotidine 5'-phosphate decarboxylase.